Consider the following 383-residue polypeptide: UDP-N-acetylenolpyruvoylglucosamine reductase (383 aa).

Residues 42–212 (LSCQAMQLIT…TRVGFKLHKD (171 aa)) form the FAD-binding PCMH-type domain. Arg189 is an active-site residue. Ser267 acts as the Proton donor in catalysis. The active site involves Glu369.

The protein belongs to the MurB family. Requires FAD as cofactor.

It is found in the cytoplasm. The enzyme catalyses UDP-N-acetyl-alpha-D-muramate + NADP(+) = UDP-N-acetyl-3-O-(1-carboxyvinyl)-alpha-D-glucosamine + NADPH + H(+). It participates in cell wall biogenesis; peptidoglycan biosynthesis. Its function is as follows. Cell wall formation. In Psychrobacter sp. (strain PRwf-1), this protein is UDP-N-acetylenolpyruvoylglucosamine reductase.